The primary structure comprises 499 residues: Endosomal/lysosomal proton channel TMEM175 (499 aa).

Polar residues predominate over residues 1-10 (MSRLQVQEQA). Residues 1 to 26 (MSRLQVQEQAVDSEGDSSLYRRDEEG) form a disordered region. The Cytoplasmic portion of the chain corresponds to 1-30 (MSRLQVQEQAVDSEGDSSLYRRDEEGTQSS). The chain crosses the membrane as a helical span at residues 31–53 (HRMLGFSDALLSIIATVMILPVT). Positions 32 to 38 (RMLGFSD) match the RxxxFSD motif 1 motif. Residues 54-74 (HTEISPEQQFDKSIQKLLATR) are Lumenal-facing. The short helix H1-1 stretch occupies residues 55 to 60 (TEISPE). Residues 62 to 68 (QFDKSIQ) are short helix H2-1. A helical transmembrane segment spans residues 75-97 (IAVYLMTFLIVTVAWAAHTRLFQ). Topologically, residues 98–103 (VVGKID) are cytoplasmic. Residues 104-125 (DTLALLNLACMMTITLLPYTFS) traverse the membrane as a helical segment. Residues 126 to 135 (LMVTFPDVPL) are Lumenal-facing. The chain crosses the membrane as a helical span at residues 136 to 157 (GIFLFCMCVIAIGSVQAMIVGY). Residues 158 to 181 (AFHFPHLLNPQIQCSTHRALSRRH) lie on the Cytoplasmic side of the membrane. The chain crosses the membrane as a helical span at residues 182 to 202 (ILHLVLRGPALCFVAAVFSLF). Over 203 to 207 (FFPLS) the chain is Lumenal. Residues 208–227 (YLLMVTVIFLPHISKATTWC) traverse the membrane as a helical segment. Topologically, residues 228–254 (KDKFMGHRESPAHNVEPFSIDLHAPLS) are cytoplasmic. Residues 255–279 (KERVEAFSDGVYAIVATLLILDICE) traverse the membrane as a helical segment. Residues 257 to 263 (RVEAFSD) carry the RxxxFSD motif 2 motif. At 280–306 (DNVPDPKDVQQKFSGSLVAALGAYGPQ) the chain is on the lumenal side. The interval 285-293 (PKDVQQKFS) is short helix H1-2. The segment at 295-301 (SLVAALG) is short helix H2-2. Residues 307 to 329 (FLAYFGSFATVGLLWFAHHSLFL) traverse the membrane as a helical segment. Residues 330–335 (HVRKAT) lie on the Cytoplasmic side of the membrane. The helical transmembrane segment at 336–357 (QTMGLFNILSLAFVGGLPLAYQ) threads the bilayer. Residues 358-372 (QTSAFARQPRDELER) are Lumenal-facing. The chain crosses the membrane as a helical span at residues 373–393 (VRVSCAIIFFASIFQFAIWTT). The Cytoplasmic portion of the chain corresponds to 394–413 (ALLHQRETLQPAVQFGGQEH). A helical membrane pass occupies residues 414-437 (AFMFAKLALYPCASLLAFAATCLL). The Lumenal portion of the chain corresponds to 438–439 (SR). The helical transmembrane segment at 440 to 466 (FSTAIFHLMQIAVPFAFLLLRLLVRLA) threads the bilayer. Residues 467–499 (LAGLQVLWDLWPERPQQDQGEPETQSQLLPASC) are Cytoplasmic-facing.

The protein belongs to the TMEM175 family. In terms of assembly, homodimer. Interacts with AKT (AKT1, AKT2 or AKT3); leading to formation of the lysoK(GF) complex, which activates the channel. Interacts with LAMP1; inhibiting the proton channel activity of TMEM175. Interacts with LAMP2; inhibiting the proton channel activity of TMEM175.

The protein resides in the endosome membrane. The protein localises to the lysosome membrane. It catalyses the reaction H(+)(in) = H(+)(out). It carries out the reaction K(+)(in) = K(+)(out). Active at low pH (under pH 4.6): proton channel activity is activated by luminal side protons. Polyunsaturated fatty acids, such as arachidonic acid, also activate the channel activity. Proton channel activity is directly inhibited by LAMP1 or LAMP2, facilitating lysosomal acidification. Channel activity is activated following interaction with AKT (AKT1, AKT2 or AKT3): interaction promotes activation from closed to an open state. Activation by AKT is independent of AKT serine/threonine-protein kinase activity. Functionally, proton-activated proton channel that catalyzes proton efflux from endosomes and lysosomes to maintain a steady-state pH. Activated at low pH (under pH 4.6) by luminal side protons: selectively mediates lysosomal proton release from lysosomes, eliciting a proton leak that balances V-ATPase activity to maintain pH homeostasis. Regulation of lumenal pH stability is required for autophagosome-lysosome fusion. Also acts as a potassium channel at higher pH, regulating potassium conductance in endosomes and lysosomes. Constitutes the pore-forming subunit of the lysoK(GF) complex, a complex activated by extracellular growth factors. The lysoK(GF) complex is composed of TMEM175 and AKT (AKT1, AKT2 or AKT3), a major target of growth factor receptors: in the complex, TMEM175 channel is opened by conformational changes by AKT, leading to its activation. The lysoK(GF) complex is required to protect neurons against stress-induced damage. This is Endosomal/lysosomal proton channel TMEM175 from Rattus norvegicus (Rat).